Consider the following 231-residue polypeptide: Type 3 secretion system stator protein (231 aa).

In terms of assembly, the core secretion machinery of the T3SS is composed of approximately 20 different proteins, including cytoplasmic components, a base, an export apparatus and a needle. This subunit is part of the cytosolic complex. Interacts directly with Spa47/SctN (T3SS ATPase) and Spa33/SctQ (the major sorting platform component). Homodimer in solution.

The protein resides in the cytoplasm. Functionally, component of the type III secretion system (T3SS), also called injectisome, which is used to inject bacterial effector proteins into eukaryotic host cells. Acts as a regulator of the Spa47/SctN ATPase activity. It down-regulates the ATPase activity of the oligomeric Spa47/SctN, while it up-regulates the activity of the monomeric form. Important for translocation of MxiH/SctF, the major needle component. In Shigella flexneri, this protein is Type 3 secretion system stator protein.